Reading from the N-terminus, the 525-residue chain is Sensory neuron membrane protein 1 (525 aa).

At 1 to 11 (MLLPKPLKYAA) the chain is on the cytoplasmic side. Residues 12-32 (IGGGVFVFGILIGWVIFPVIL) form a helical membrane-spanning segment. The Extracellular portion of the chain corresponds to 33 to 456 (KSQIKKEMAL…LKHQLFIPKR (424 aa)). 3 N-linked (GlcNAc...) asparagine glycosylation sites follow: N67, N105, and N229. Intrachain disulfides connect C268-C333, C297-C352, and C335-C341. N440 is a glycosylation site (N-linked (GlcNAc...) asparagine). Residues 457 to 477 (IVGVIRWWMVSFGLIAVLAGV) traverse the membrane as a helical segment. Over 478-525 (MYHFKDNIMGWAAKGESTTAKVNPEDGSNEQRGVSVIGQDREPPKVTM) the chain is Cytoplasmic. Positions 496-525 (TAKVNPEDGSNEQRGVSVIGQDREPPKVTM) are disordered. Basic and acidic residues predominate over residues 516-525 (QDREPPKVTM).

The protein belongs to the CD36 family. In terms of tissue distribution, principal component of the olfactory cilia membrane. Localizes to the somata, dendritic neck and cilia of the olfactory neurons (at protein level). Not detected in the axons of ORNs, the cytoplasm of auxiliary cells or non-sensory structures. Expression is universal among ORNs but differential between neuron and sensillum types.

The protein localises to the cell membrane. In terms of biological role, plays an olfactory role that is not restricted to pheromone sensitivity. May be involved in the odor detection properties of the olfactory receptor neurons (ORNs) rather than their differentiation and growth. The sequence is that of Sensory neuron membrane protein 1 from Antheraea polyphemus (Polyphemus moth).